Here is a 732-residue protein sequence, read N- to C-terminus: Probable zinc transporter cis4 (732 aa).

12 consecutive transmembrane segments (helical) span residues 52-72, 79-99, 111-131, 163-183, 189-209, 219-239, 240-260, 268-288, 350-370, 380-400, 415-435, and 453-473; these read ETLG…GLEV, FYLI…LGIY, VIIA…LGTL, YIAF…LGYF, VFYA…FYLV, LAFL…VLPL, GTIN…IFCI, IQFY…SAII, IFYF…YGLW, AIHM…TTLA, IEAL…FSIV, and LLLV…AFNH. The segment at 526-547 is disordered; it reads HVSQHEHTHENSQEHHHEHNHN. 2 consecutive transmembrane segments (helical) span residues 586-606 and 615-635; these read IFLH…STIL and FDPL…LPLI.

It belongs to the cation diffusion facilitator (CDF) transporter (TC 2.A.4) family. SLC30A subfamily. Interacts with zrg17.

It localises to the endoplasmic reticulum membrane. It is found in the golgi apparatus. The protein resides in the cis-Golgi network membrane. Its function is as follows. Probable zinc transporter involved in Golgi membrane trafficking through the regulation of zinc homeostasis. This chain is Probable zinc transporter cis4 (cis4), found in Schizosaccharomyces pombe (strain 972 / ATCC 24843) (Fission yeast).